Consider the following 205-residue polypeptide: LexA repressor (205 aa).

Residues 28-48 constitute a DNA-binding region (H-T-H motif); that stretch reads VREIGEAVGLASSSTVHGHLA. Residues S127 and K165 each act as for autocatalytic cleavage activity in the active site.

The protein belongs to the peptidase S24 family. Homodimer. Post-translationally, following treatment with mitomycin C protein levels begin to decrease after a 5-min lag and do not return to their original levels for at least 90 minutes.

The catalysed reaction is Hydrolysis of Ala-|-Gly bond in repressor LexA.. Its function is as follows. Represses dinA, dinB, dinC, recA genes and itself by binding to the 14 bp palindromic sequence 5'-CGAACNNNNGTTCG-3'; some genes have a tandem consensus sequence and their binding is cooperative. In the presence of single-stranded DNA, RecA interacts with LexA causing an autocatalytic cleavage which disrupts the DNA-binding part of LexA, leading to derepression of the SOS regulon and eventually DNA repair; autocleavage is maximal at pH 11 in the absence of RecA and ssDNA. In Bacillus subtilis (strain 168), this protein is LexA repressor.